The sequence spans 329 residues: GDP-mannose transporter (329 aa).

The Cytoplasmic portion of the chain corresponds to 1-13; the sequence is MSELKVDTGRLSH. The chain crosses the membrane as a helical span at residues 14–34; the sequence is IANSGPMSILAYCASSILMTV. Topologically, residues 35–44 are lumenal; that stretch reads TNKCVVGSDK. The helical transmembrane segment at 45-65 threads the bilayer; the sequence is FNMLFVMLFAQSLVCVTALVL. The Cytoplasmic segment spans residues 66 to 79; sequence LKALGYVQYRPLNK. A helical transmembrane segment spans residues 80 to 100; that stretch reads VDVKNWLLISVLLVLMTYTSS. Residues 101–109 are Lumenal-facing; that stretch reads RALKYLAVP. A helical membrane pass occupies residues 110–130; sequence IYTIFKNLTIILIAYGEVLFF. Residues 131–133 lie on the Cytoplasmic side of the membrane; that stretch reads GGR. A helical transmembrane segment spans residues 134-154; the sequence is VTAMELSSFLLIVLSSVVATL. At 155–174 the chain is on the lumenal side; it reads GDQQALAKKPLAAAVESILG. The chain crosses the membrane as a helical span at residues 175–195; that stretch reads LNVGYFWMFTNCICSALFVLI. Topologically, residues 196–214 are cytoplasmic; that stretch reads MRKRIALTKFKDFDTMFYN. A helical transmembrane segment spans residues 215-235; that stretch reads NILSLPLLMLASFMFEDWGAA. The Lumenal portion of the chain corresponds to 236–245; sequence NIARNLTKDY. N-linked (GlcNAc...) asparagine glycosylation occurs at Asn-240. Residues 246–266 traverse the membrane as a helical segment; that stretch reads IIIMIISGLASVGISYCSGWC. At 267-273 the chain is on the cytoplasmic side; the sequence is VRVTSST. A helical transmembrane segment spans residues 274–294; that stretch reads TYSMVGALNKLPIALSGLLFF. Residues 295-298 lie on the Lumenal side of the membrane; the sequence is DAPK. The chain crosses the membrane as a helical span at residues 299–319; that stretch reads NFLSIFSIFLGFLSGIVYAVA. The Cytoplasmic segment spans residues 320–329; sequence KQKKQSQPAN.

Belongs to the TPT transporter family. SLC35D subfamily. In terms of assembly, homooligomer.

The protein resides in the golgi apparatus membrane. The protein localises to the cytoplasmic vesicle membrane. It is found in the endoplasmic reticulum membrane. Involved in the import of GDP-mannose from the cytoplasm into the Golgi lumen. This chain is GDP-mannose transporter (VRG4), found in Eremothecium gossypii (strain ATCC 10895 / CBS 109.51 / FGSC 9923 / NRRL Y-1056) (Yeast).